Reading from the N-terminus, the 255-residue chain is Kallikrein-4 (255 aa).

The signal sequence occupies residues 1-25 (MMVTARTPWGWFLGCLILEVTGASA). Residues 26–31 (SSVSSR) constitute a propeptide that is removed on maturation. Positions 32 to 253 (IIQGQDCSPH…FTNWIQTIIQ (222 aa)) constitute a Peptidase S1 domain. His-41 provides a ligand contact to Zn(2+). An intrachain disulfide couples Cys-57 to Cys-73. His-72 (charge relay system) is an active-site residue. Glu-92 serves as a coordination point for Zn(2+). The active-site Charge relay system is the Asp-117. N-linked (GlcNAc...) asparagine glycosylation is found at Asn-124 and Asn-170. Cystine bridges form between Cys-149–Cys-214, Cys-179–Cys-193, and Cys-204–Cys-229. The Charge relay system role is filled by Ser-208.

This sequence belongs to the peptidase S1 family. Kallikrein subfamily. N-glycosylated. The N-glycan structures are of complex diantennary or triantennary type, which may be further modified with up to 2 sialic acid residues.

It localises to the secreted. Functionally, has a major role in enamel formation. Required during the maturation stage of tooth development for clearance of enamel proteins and normal structural patterning of the crystalline matrix. The polypeptide is Kallikrein-4 (Mus musculus (Mouse)).